A 736-amino-acid polypeptide reads, in one-letter code: Sulfate transporter (736 aa).

The segment at 1 to 28 (MSSESKEPHVLSPKDSFEGNDRYSPPSR) is disordered. 2 positions are modified to phosphoserine: serine 12 and serine 16. Transmembrane regions (helical) follow at residues 114 to 134 (VMSG…YSLL) and 139 to 159 (PIYG…LGTS). N-linked (GlcNAc...) asparagine glycans are attached at residues asparagine 201 and asparagine 207. 6 consecutive transmembrane segments (helical) span residues 229-249 (FLAG…VSVY), 257-277 (GFVT…LLGL), 380-400 (LIPS…AITV), 422-442 (AIGF…SAAL), 457-477 (LSGV…APLF), and 526-546 (LIST…CVIL). Positions 570–721 (AYKNLQARPG…YSVYEAMAFA (152 aa)) constitute an STAS domain.

This sequence belongs to the SLC26A/SulP transporter (TC 2.A.53) family. In terms of processing, N-glycosylated.

The protein resides in the cell membrane. Its subcellular location is the apical cell membrane. It carries out the reaction oxalate(in) + sulfate(out) = oxalate(out) + sulfate(in). The enzyme catalyses sulfate(out) + 2 chloride(in) = sulfate(in) + 2 chloride(out). It catalyses the reaction oxalate(out) + 2 chloride(in) = oxalate(in) + 2 chloride(out). The catalysed reaction is bromide(in) + chloride(out) = bromide(out) + chloride(in). It carries out the reaction nitrate(in) + chloride(out) = nitrate(out) + chloride(in). The enzyme catalyses iodide(in) + chloride(out) = iodide(out) + chloride(in). Sulfate transporter which mediates sulfate uptake into chondrocytes in order to maintain adequate sulfation of proteoglycans which is needed for cartilage development. Mediates electroneutral anion exchange of sulfate ions for oxalate ions, sulfate and oxalate ions for chloride and/or hydroxyl ions and chloride ions for bromide, iodide and nitrate ions. The coupling of sulfate transport to both hydroxyl and chloride ions likely serves to ensure transport at both acidic pH when most sulfate uptake is mediated by sulfate-hydroxide exchange and alkaline pH when most sulfate uptake is mediated by sulfate-chloride exchange. Essential for chondrocyte proliferation, differentiation and cell size expansion. The sequence is that of Sulfate transporter (SLC26A2) from Equus caballus (Horse).